A 450-amino-acid chain; its full sequence is UDP-N-acetylmuramoylalanine--D-glutamate ligase (450 aa).

Residue 115–121 coordinates ATP; it reads GTNGKTT.

It belongs to the MurCDEF family.

It localises to the cytoplasm. The catalysed reaction is UDP-N-acetyl-alpha-D-muramoyl-L-alanine + D-glutamate + ATP = UDP-N-acetyl-alpha-D-muramoyl-L-alanyl-D-glutamate + ADP + phosphate + H(+). It functions in the pathway cell wall biogenesis; peptidoglycan biosynthesis. In terms of biological role, cell wall formation. Catalyzes the addition of glutamate to the nucleotide precursor UDP-N-acetylmuramoyl-L-alanine (UMA). The sequence is that of UDP-N-acetylmuramoylalanine--D-glutamate ligase from Caldanaerobacter subterraneus subsp. tengcongensis (strain DSM 15242 / JCM 11007 / NBRC 100824 / MB4) (Thermoanaerobacter tengcongensis).